A 45-amino-acid polypeptide reads, in one-letter code: Large ribosomal subunit protein bL34 (45 aa).

This sequence belongs to the bacterial ribosomal protein bL34 family.

The sequence is that of Large ribosomal subunit protein bL34 from Frankia casuarinae (strain DSM 45818 / CECT 9043 / HFP020203 / CcI3).